A 411-amino-acid polypeptide reads, in one-letter code: Arginine deiminase (411 aa).

Cys-401 serves as the catalytic Amidino-cysteine intermediate.

The protein belongs to the arginine deiminase family.

The protein resides in the cytoplasm. It catalyses the reaction L-arginine + H2O = L-citrulline + NH4(+). It participates in amino-acid degradation; L-arginine degradation via ADI pathway; carbamoyl phosphate from L-arginine: step 1/2. This is Arginine deiminase from Staphylococcus aureus (strain JH9).